Reading from the N-terminus, the 374-residue chain is Carboxypeptidase O (374 aa).

The N-terminal stretch at 1 to 20 is a signal peptide; that stretch reads MKPLLETLYLLGMLVPGGLG. Residues 49 to 344 form the Peptidase M14 domain; it reads IYHPMGEIYE…EAVLSVLDDV (296 aa). Histidine 108 and glutamate 111 together coordinate Zn(2+). Asparagine 132, asparagine 174, and asparagine 187 each carry an N-linked (GlcNAc...) asparagine glycan. Histidine 236 provides a ligand contact to Zn(2+). An N-linked (GlcNAc...) asparagine glycan is attached at asparagine 251. Catalysis depends on glutamate 310, which acts as the Proton donor/acceptor. Aspartate 352 carries the GPI-anchor amidated aspartate lipid modification. Residues 353-374 constitute a propeptide, removed in mature form; that stretch reads SAGRVTSATMLLGLLVSCMSLL.

This sequence belongs to the peptidase M14 family. Requires Zn(2+) as cofactor. Post-translationally, N-glycosylated. As to expression, detected in enterocytes of the ileum.

It is found in the apical cell membrane. Its activity is regulated as follows. Strongly inhibited by potato carboxypeptidase inhibitor, and the chelating agents EDTA and 1,10-phenanthroline. Also inhibited by compounds with multiple carboxylic acid groups such as citrate and succinate, and to a lesser exent the amino acids aspartate and glutamate. Not significantly inhibited by benzylsuccinic acid. Carboxypeptidase which preferentially cleaves C-terminal acidic residues from peptides and proteins. Can also cleave C-terminal hydrophobic amino acids, with a preference for small residues over large residues. This is Carboxypeptidase O from Homo sapiens (Human).